We begin with the raw amino-acid sequence, 955 residues long: Structure-specific endonuclease subunit SLX4 (955 aa).

Disordered regions lie at residues 75-173, 189-231, 352-376, 539-608, 621-648, 705-784, and 819-846; these read QAEQ…RTTS, PVTT…TVSR, GPSN…KKPR, EMQK…PTKI, PIVA…PPPR, AAGQ…ASPD, and LDSD…EKDS. Positions 123-137 are enriched in basic residues; that stretch reads RKARKTANGVTKKKR. A compositionally biased stretch (polar residues) spans 150–159; it reads NEITTPTKNQ. Residues 189–198 show a composition bias toward low complexity; that stretch reads PVTTSTTDLT. Positions 209–225 are enriched in basic residues; that stretch reads TKSRVRKTSSAASRKKK. Residues 352–362 are compositionally biased toward polar residues; that stretch reads GPSNDSKIPNQ. Basic and acidic residues predominate over residues 539–551; the sequence is EMQKSPSRSEPKG. Positions 579–601 are enriched in polar residues; the sequence is SANSAEHTLKTQASKSTHFASTT. Composition is skewed to low complexity over residues 705–720 and 727–737; these read AAGQ…RTSA and KTSTAAAAAKS. Composition is skewed to basic residues over residues 738–748 and 767–776; these read PTKRPVGRPRK and KRPRGRPKKN. Residues 828–841 are compositionally biased toward low complexity; it reads SPSPSLSPEPVFSS.

Belongs to the SLX4 family. In terms of assembly, forms a heterodimer with SLX1. Phosphorylated in response to DNA damage.

It localises to the nucleus. Functionally, regulatory subunit of the SLX1-SLX4 structure-specific endonuclease that resolves DNA secondary structures generated during DNA repair and recombination. Has endonuclease activity towards branched DNA substrates, introducing single-strand cuts in duplex DNA close to junctions with ss-DNA. The protein is Structure-specific endonuclease subunit SLX4 of Pyricularia oryzae (strain 70-15 / ATCC MYA-4617 / FGSC 8958) (Rice blast fungus).